The primary structure comprises 538 residues: Phosphoenolpyruvate carboxykinase (ATP) (538 aa).

Positions 64, 205, and 211 each coordinate substrate. Residues Lys-211, His-230, and 246 to 254 each bind ATP; that span reads GLSGTGKTT. 2 residues coordinate Mn(2+): Lys-211 and His-230. Asp-267 serves as a coordination point for Mn(2+). ATP-binding positions include Glu-295, Arg-331, 447-448, and Thr-453; that span reads RI. Position 331 (Arg-331) interacts with substrate.

This sequence belongs to the phosphoenolpyruvate carboxykinase (ATP) family. In terms of assembly, monomer. Mn(2+) serves as cofactor.

Its subcellular location is the cytoplasm. It catalyses the reaction oxaloacetate + ATP = phosphoenolpyruvate + ADP + CO2. The protein operates within carbohydrate biosynthesis; gluconeogenesis. Involved in the gluconeogenesis. Catalyzes the conversion of oxaloacetate (OAA) to phosphoenolpyruvate (PEP) through direct phosphoryl transfer between the nucleoside triphosphate and OAA. This Haemophilus influenzae (strain PittEE) protein is Phosphoenolpyruvate carboxykinase (ATP).